The primary structure comprises 994 residues: Seizure protein 6 homolog (994 aa).

An N-terminal signal peptide occupies residues 1–19 (MRPVALLLLPSLLALLAHG). Residues 20–925 (LSLEAPTVGK…AASSTLDAAH (906 aa)) are Extracellular-facing. The tract at residues 28-50 (GKGQAPGIEETDGELTAAPTPEQ) is disordered. 2 O-glycosylated at two sites regions span residues 38 to 47 (TDGELTAAPT) and 59 to 63 (TTAPT). 3 disordered regions span residues 88-146 (LRPA…ESES), 171-191 (IAST…PGDM), and 241-261 (PGPC…PTDL). Residues 93–107 (PFQPDPPAPFTPSPL) show a composition bias toward pro residues. Composition is skewed to polar residues over residues 112–123 (NQDSRPVFTSPT) and 172–185 (ASTT…TPTQ). Residue Asn289 is glycosylated (N-linked (GlcNAc...) asparagine). The 60-residue stretch at 355–414 (LSCHFPRRPAYGDVTVTSLHPGGSARFHCATGYQLKGARHLTCLNATQPFWDSKEPVCIA) folds into the Sushi 1 domain. 12 disulfides stabilise this stretch: Cys357–Cys397, Cys383–Cys412, Cys416–Cys443, Cys532–Cys574, Cys559–Cys589, Cys593–Cys619, Cys710–Cys752, Cys738–Cys765, Cys771–Cys813, Cys799–Cys830, Cys838–Cys880, and Cys866–Cys895. N-linked (GlcNAc...) asparagine glycosylation is found at Asn399, Asn436, and Asn541. The 112-residue stretch at 416–527 (CGGVIRNATT…AGMALRYEAF (112 aa)) folds into the CUB 1 domain. The Sushi 2 domain maps to 530–591 (GHCYEPFVKY…WNETEPACRA (62 aa)). The CUB 2 domain occupies 593–704 (CSGEITDSAG…QGFVIHFFEV (112 aa)). Sushi domains are found at residues 708 to 767 (DTCP…SCQR), 769 to 832 (TSCH…KCLL), and 836 to 897 (KPCH…ICRA). Residues 926-946 (IAAAIFLPLVAMVLLVGGVYF) traverse the membrane as a helical segment. The Cytoplasmic segment spans residues 947–994 (YFSRLQGKSSLQLPRPRPRPYNRITIESAFDNPTYETGSLSFAGDERI).

It belongs to the SEZ6 family. Glycosylated.

Its subcellular location is the cell membrane. May play a role in cell-cell recognition and in neuronal membrane signaling. Seems to be important for the achievement of the necessary balance between dendrite elongation and branching during the elaboration of a complex dendritic arbor. Involved in the development of appropriate excitatory synaptic connectivity. The chain is Seizure protein 6 homolog (SEZ6) from Homo sapiens (Human).